Consider the following 421-residue polypeptide: UDP-N-acetylglucosamine 1-carboxyvinyltransferase (421 aa).

Residue 23–24 (KN) coordinates phosphoenolpyruvate. Position 92 (Arg-92) interacts with UDP-N-acetyl-alpha-D-glucosamine. Cys-116 (proton donor) is an active-site residue. The residue at position 116 (Cys-116) is a 2-(S-cysteinyl)pyruvic acid O-phosphothioketal. Residues 121–125 (RPVDL), 161–164 (KVSV), Asp-306, and Ile-328 contribute to the UDP-N-acetyl-alpha-D-glucosamine site.

This sequence belongs to the EPSP synthase family. MurA subfamily.

The protein resides in the cytoplasm. The enzyme catalyses phosphoenolpyruvate + UDP-N-acetyl-alpha-D-glucosamine = UDP-N-acetyl-3-O-(1-carboxyvinyl)-alpha-D-glucosamine + phosphate. It participates in cell wall biogenesis; peptidoglycan biosynthesis. Cell wall formation. Adds enolpyruvyl to UDP-N-acetylglucosamine. The polypeptide is UDP-N-acetylglucosamine 1-carboxyvinyltransferase (Vibrio campbellii (strain ATCC BAA-1116)).